Here is a 180-residue protein sequence, read N- to C-terminus: Small ribosomal subunit protein uS5 (180 aa).

Residues 24 to 87 enclose the S5 DRBM domain; sequence MIEKLVAVNR…EQARKNLATV (64 aa).

Belongs to the universal ribosomal protein uS5 family. Part of the 30S ribosomal subunit. Contacts proteins S4 and S8.

With S4 and S12 plays an important role in translational accuracy. Functionally, located at the back of the 30S subunit body where it stabilizes the conformation of the head with respect to the body. This Xanthomonas axonopodis pv. citri (strain 306) protein is Small ribosomal subunit protein uS5.